A 459-amino-acid polypeptide reads, in one-letter code: MNRLPSSASALACSAHALNLIEKRTLNHEEMKALNREVIDYFKEHVNPGFLEYRKSVTAGGDYGAVEWQAGSLNTLVDTQGQEFIDCLGGFGIFNVGHRNPVVVSAVQNQLAKQPLHSQELLDPLRAMLAKTLAALTPGKLKYSFFCNSGTESVEAALKLAKAYQSPRGKFTFIATSGAFHGKSLGALSATAKSTFRRPFMPLLPGFRHVPFGNIDAMSMAFSEGKKTGDEIAAVILEPIQGEGGVILPPQGYLTEVRKLCDEFGALMILDEVQTGMGRTGKMFACEHENVQPDILCLAKALGGGVMPIGATIATEEVFSVLFDNPFLHTTTFGGNPLACAAALATINVLLEQNLPAQAEQKGDTLLDGFRQLAREYPNLVHDARGKGMLMAIEFVDNETGYRFASEMFRQRVLVAGTLNNAKTIRIEPPLTLTIELCEQVLKSARNALAAMQVSVEEV.

Residues 150–151 (GT) and Gln-274 contribute to the pyridoxal 5'-phosphate site. At Lys-300 the chain carries N6-(pyridoxal phosphate)lysine. A pyridoxal 5'-phosphate-binding site is contributed by Thr-332.

This sequence belongs to the class-III pyridoxal-phosphate-dependent aminotransferase family. Putrescine aminotransferase subfamily. Pyridoxal 5'-phosphate serves as cofactor.

The catalysed reaction is an alkane-alpha,omega-diamine + 2-oxoglutarate = an omega-aminoaldehyde + L-glutamate. The enzyme catalyses putrescine + 2-oxoglutarate = 1-pyrroline + L-glutamate + H2O. It carries out the reaction cadaverine + 2-oxoglutarate = 5-aminopentanal + L-glutamate. It functions in the pathway amine and polyamine degradation; putrescine degradation; 4-aminobutanal from putrescine (transaminase route): step 1/1. In terms of biological role, catalyzes the aminotransferase reaction from putrescine to 2-oxoglutarate, leading to glutamate and 4-aminobutanal, which spontaneously cyclizes to form 1-pyrroline. This is the first step in one of two pathways for putrescine degradation, where putrescine is converted into 4-aminobutanoate (gamma-aminobutyrate or GABA) via 4-aminobutanal. Also functions as a cadaverine transaminase in a a L-lysine degradation pathway to succinate that proceeds via cadaverine, glutarate and L-2-hydroxyglutarate. The polypeptide is Putrescine aminotransferase (Salmonella agona (strain SL483)).